The sequence spans 93 residues: Small ribosomal subunit protein uS19m (93 aa).

It belongs to the universal ribosomal protein uS19 family.

It is found in the mitochondrion. The protein is Small ribosomal subunit protein uS19m (RPS19) of Marchantia polymorpha (Common liverwort).